We begin with the raw amino-acid sequence, 71 residues long: Small ribosomal subunit protein bS21 (71 aa).

The protein belongs to the bacterial ribosomal protein bS21 family.

This is Small ribosomal subunit protein bS21 from Buchnera aphidicola subsp. Acyrthosiphon pisum (strain 5A).